Consider the following 355-residue polypeptide: Inositol-tetrakisphosphate 1-kinase 4 (355 aa).

Position 65 (Lys65) interacts with 1D-myo-inositol 1,3,4-trisphosphate. Arg101 and Lys146 together coordinate ATP. Positions 107 to 318 (VVSGLRTPVS…FFLEMLRGTR (212 aa)) constitute an ATP-grasp domain. His157 and Lys190 together coordinate 1D-myo-inositol 1,3,4-trisphosphate. Residues 179–190 (QEFVNHGGVLFK) and Ser205 each bind ATP. Residues 225 to 248 (FANISNQPLPPPDDDGGAADDDTP) form a disordered region. A compositionally biased stretch (acidic residues) spans 236–247 (PDDDGGAADDDT). 3 residues coordinate Mg(2+): Asp272, Asp289, and Asn291. A 1D-myo-inositol 1,3,4-trisphosphate-binding site is contributed by Asn291.

The protein belongs to the ITPK1 family. In terms of assembly, monomer. Mg(2+) is required as a cofactor.

The enzyme catalyses 1D-myo-inositol 3,4,5,6-tetrakisphosphate + ATP = 1D-myo-inositol 1,3,4,5,6-pentakisphosphate + ADP + H(+). The catalysed reaction is 1D-myo-inositol 1,3,4-trisphosphate + ATP = 1D-myo-inositol 1,3,4,5-tetrakisphosphate + ADP + H(+). It catalyses the reaction 1D-myo-inositol 1,3,4-trisphosphate + ATP = 1D-myo-inositol 1,3,4,6-tetrakisphosphate + ADP + H(+). Kinase that can phosphorylate various inositol polyphosphate such as Ins(3,4,5,6)P4 or Ins(1,3,4)P3 and participates in phytic acid biosynthesis in developing seeds. Phytic acid is the primary storage form of phosphorus in cereal grains and other plant seeds. This is Inositol-tetrakisphosphate 1-kinase 4 (ITPK4) from Oryza sativa subsp. indica (Rice).